A 28-amino-acid chain; its full sequence is GLMDVLKGAAKNLFASALDKLKCKVTGC.

Cys-23 and Cys-28 form a disulfide bridge.

As to expression, expressed by the skin glands.

It is found in the secreted. In terms of biological role, has antibacterial activity. The polypeptide is Ranatuerin-2LT (Rana latastei (Italian agile frog)).